Reading from the N-terminus, the 178-residue chain is Large ribosomal subunit protein uL10 (178 aa).

Belongs to the universal ribosomal protein uL10 family. As to quaternary structure, part of the ribosomal stalk of the 50S ribosomal subunit. The N-terminus interacts with L11 and the large rRNA to form the base of the stalk. The C-terminus forms an elongated spine to which L12 dimers bind in a sequential fashion forming a multimeric L10(L12)X complex.

In terms of biological role, forms part of the ribosomal stalk, playing a central role in the interaction of the ribosome with GTP-bound translation factors. In Stenotrophomonas maltophilia (strain R551-3), this protein is Large ribosomal subunit protein uL10.